We begin with the raw amino-acid sequence, 550 residues long: uncharacterized protein (550 aa).

The signal sequence occupies residues 1–13 (MAGALFEPSFAAA). The interval 312–358 (DAQPDPHLSGDEPPSRPLTPETTLFEALTPDPEPDPPATHAPAELIT) is disordered.

It to M.tuberculosis Rv3776.

This is an uncharacterized protein from Mycobacterium tuberculosis (strain CDC 1551 / Oshkosh).